The primary structure comprises 677 residues: MLFLKNIGVFFMIFLVSKSYATDCNKITNEEECHKSSECIVINYTPCCGEQKWACSKGTFDTCTYENSCYRNSSNNQVVEVSNKCFNLDGFIKITTPTEYSCSDAKIKECALLGKSCSFQKNSCSNPTSCCPGESICEGLSSGSSTSGGGSSGGTSGGSSSGGTSGGSSSGGTSGSSSSGSSSGGVSSCSTTHCPEGYHCSMVNDVATCLASTTGGTGLPGTSSSTAGVSSCLTTLCPIGHICVEDSNGVNCVPNGGGTSGGSSSTGTSGGHPDPCRDVDCPDGFHCECKDGKTAKCVPSPTTGSSSTSGGHPDPCKDVTCPDGFHCECKDGKTAKCVPSPTTGSSSTSGGNTNPCSNVNCPDGFYCECKDGKTAKCVPSGPTQPPKPPVCSLRCPPNHECRFNDQGHQCCVKVHHDRCSLRCPHGHECKVDHNGKECCVRSHRPPPPEVCSLRCPPKHECKFDDHGKKCCVKIHCDEVCDLDCGRGFECKIRHDGSKCCVRSERPHPPQHEKCNKRCPPGHECKVDQHGKECCVVAHRPPPKCSLRCPPRHECRVNHFGEECCVKVHHDKCSLRCPPGHECKVDQHGKECCVVAHRPPPKCSLRCPPKHECRINHFGEECCVKSRNDCLTCEDLNCERKGLHCAMKTVPIDKENCCEKVPVCYSTNPLLDGGHGFI.

The N-terminal stretch at Met-1–Ala-21 is a signal peptide. The 121-residue stretch at Thr-22–Ser-142 folds into the DSCP-N domain. N-linked (GlcNAc...) asparagine glycosylation occurs at Asn-72. Gly residues predominate over residues Gly-148 to Ser-174. Residues Gly-148 to Gly-184 are disordered. The span at Gly-175 to Gly-184 shows a compositional bias: low complexity. Follistatin-like domains follow at residues Ser-188 to Leu-210, Ser-231 to Val-253, Pro-275 to Val-298, Pro-315 to Val-338, Pro-355 to Val-378, Arg-418 to Val-440, Val-479 to Val-501, Asn-515 to Val-535, and Lys-571 to Val-593.

Disulfide bonding is important for associating SP87 with the coat. In terms of processing, phosphorylated on serine residues.

Its subcellular location is the cytoplasmic vesicle. It is found in the secretory vesicle. The protein resides in the spore coat. In terms of biological role, may contribute to the structure of the coat at the interface between the middle, cellulosic layer and the outer, electron-dense, proteinaceous layer. The protein is Spore coat protein SP87 (pspD) of Dictyostelium discoideum (Social amoeba).